The chain runs to 103 residues: uncharacterized protein (103 aa).

A helical transmembrane segment spans residues 38–58 (FTTLITIYVAAFYTGVIGAAV).

The protein resides in the membrane. This is an uncharacterized protein from Arabidopsis thaliana (Mouse-ear cress).